Here is a 110-residue protein sequence, read N- to C-terminus: Large ribosomal subunit protein uL22 (110 aa).

Belongs to the universal ribosomal protein uL22 family. Part of the 50S ribosomal subunit.

Functionally, this protein binds specifically to 23S rRNA; its binding is stimulated by other ribosomal proteins, e.g. L4, L17, and L20. It is important during the early stages of 50S assembly. It makes multiple contacts with different domains of the 23S rRNA in the assembled 50S subunit and ribosome. In terms of biological role, the globular domain of the protein is located near the polypeptide exit tunnel on the outside of the subunit, while an extended beta-hairpin is found that lines the wall of the exit tunnel in the center of the 70S ribosome. The chain is Large ribosomal subunit protein uL22 from Syntrophobacter fumaroxidans (strain DSM 10017 / MPOB).